The chain runs to 156 residues: Small ribosomal subunit protein uS7 (156 aa).

This sequence belongs to the universal ribosomal protein uS7 family. Part of the 30S ribosomal subunit. Contacts proteins S9 and S11.

Functionally, one of the primary rRNA binding proteins, it binds directly to 16S rRNA where it nucleates assembly of the head domain of the 30S subunit. Is located at the subunit interface close to the decoding center, probably blocks exit of the E-site tRNA. In Listeria innocua serovar 6a (strain ATCC BAA-680 / CLIP 11262), this protein is Small ribosomal subunit protein uS7.